The primary structure comprises 154 residues: 17.4 kDa class I heat shock protein (154 aa).

Residues 40–154 (DAAAFAGARI…PDVKSIQITG (115 aa)) enclose the sHSP domain.

This sequence belongs to the small heat shock protein (HSP20) family. In terms of assembly, may form oligomeric structures.

It is found in the cytoplasm. In Oryza sativa subsp. japonica (Rice), this protein is 17.4 kDa class I heat shock protein (HSP17.4).